The sequence spans 289 residues: Secretory carrier-associated membrane protein (289 aa).

The interval 1-65 is disordered; sequence MAGRYDPNPF…TSTDGKKKER (65 aa). Topologically, residues 1–123 are cytoplasmic; the sequence is MAGRYDPNPF…EIPIHLRTLQ (123 aa). Over residues 16–31 the composition is skewed to polar residues; the sequence is NPFSNPRSAASATNSR. A coiled-coil region spans residues 59–98; sequence DGKKKERDLQAKEAELRKREQEVRRKEEAIARAGIVIEEK. Transmembrane regions (helical) follow at residues 124 to 144, 156 to 176, 191 to 211, and 239 to 259; these read YVAF…VVSV, IWFL…ALWY, FGWF…AAVA, and IFYF…IWVI. Residues 260–289 lie on the Cytoplasmic side of the membrane; that stretch reads QQVYMHFRGGGKTAEMKREAALGAMGAALR.

The protein belongs to the SCAMP family.

It localises to the cell membrane. It is found in the cytoplasmic vesicle. Its subcellular location is the secretory vesicle membrane. In terms of biological role, probably involved in membrane trafficking. This Pisum sativum (Garden pea) protein is Secretory carrier-associated membrane protein (PSAM2).